A 546-amino-acid chain; its full sequence is Chaperonin GroEL (546 aa).

Residues 29–32 (TMGP), Lys-50, 86–90 (DGTTT), Gly-414, and Asp-492 contribute to the ATP site.

Belongs to the chaperonin (HSP60) family. In terms of assembly, forms a cylinder of 14 subunits composed of two heptameric rings stacked back-to-back. Interacts with the co-chaperonin GroES.

It localises to the cytoplasm. It carries out the reaction ATP + H2O + a folded polypeptide = ADP + phosphate + an unfolded polypeptide.. Its function is as follows. Together with its co-chaperonin GroES, plays an essential role in assisting protein folding. The GroEL-GroES system forms a nano-cage that allows encapsulation of the non-native substrate proteins and provides a physical environment optimized to promote and accelerate protein folding. The chain is Chaperonin GroEL from Helicobacter pylori (strain ATCC 700392 / 26695) (Campylobacter pylori).